We begin with the raw amino-acid sequence, 307 residues long: UDP-3-O-acyl-N-acetylglucosamine deacetylase (307 aa).

Residues His78, His241, and Asp245 each coordinate Zn(2+). His268 functions as the Proton donor in the catalytic mechanism.

Belongs to the LpxC family. Zn(2+) serves as cofactor.

It carries out the reaction a UDP-3-O-[(3R)-3-hydroxyacyl]-N-acetyl-alpha-D-glucosamine + H2O = a UDP-3-O-[(3R)-3-hydroxyacyl]-alpha-D-glucosamine + acetate. It functions in the pathway glycolipid biosynthesis; lipid IV(A) biosynthesis; lipid IV(A) from (3R)-3-hydroxytetradecanoyl-[acyl-carrier-protein] and UDP-N-acetyl-alpha-D-glucosamine: step 2/6. Catalyzes the hydrolysis of UDP-3-O-myristoyl-N-acetylglucosamine to form UDP-3-O-myristoylglucosamine and acetate, the committed step in lipid A biosynthesis. The protein is UDP-3-O-acyl-N-acetylglucosamine deacetylase of Polaromonas sp. (strain JS666 / ATCC BAA-500).